A 248-amino-acid chain; its full sequence is 5'-nucleotidase SurE (248 aa).

A divalent metal cation contacts are provided by D8, D9, S39, and N92.

It belongs to the SurE nucleotidase family. A divalent metal cation is required as a cofactor.

It is found in the cytoplasm. The catalysed reaction is a ribonucleoside 5'-phosphate + H2O = a ribonucleoside + phosphate. In terms of biological role, nucleotidase that shows phosphatase activity on nucleoside 5'-monophosphates. This Tolumonas auensis (strain DSM 9187 / NBRC 110442 / TA 4) protein is 5'-nucleotidase SurE.